We begin with the raw amino-acid sequence, 232 residues long: Large ribosomal subunit protein uL1 (232 aa).

This sequence belongs to the universal ribosomal protein uL1 family. Part of the 50S ribosomal subunit.

In terms of biological role, binds directly to 23S rRNA. The L1 stalk is quite mobile in the ribosome, and is involved in E site tRNA release. Protein L1 is also a translational repressor protein, it controls the translation of the L11 operon by binding to its mRNA. This Paraburkholderia phymatum (strain DSM 17167 / CIP 108236 / LMG 21445 / STM815) (Burkholderia phymatum) protein is Large ribosomal subunit protein uL1.